A 354-amino-acid polypeptide reads, in one-letter code: UDP-3-O-acylglucosamine N-acyltransferase (354 aa).

H245 functions as the Proton acceptor in the catalytic mechanism.

This sequence belongs to the transferase hexapeptide repeat family. LpxD subfamily. Homotrimer.

The enzyme catalyses a UDP-3-O-[(3R)-3-hydroxyacyl]-alpha-D-glucosamine + a (3R)-hydroxyacyl-[ACP] = a UDP-2-N,3-O-bis[(3R)-3-hydroxyacyl]-alpha-D-glucosamine + holo-[ACP] + H(+). The protein operates within bacterial outer membrane biogenesis; LPS lipid A biosynthesis. Its function is as follows. Catalyzes the N-acylation of UDP-3-O-acylglucosamine using 3-hydroxyacyl-ACP as the acyl donor. Is involved in the biosynthesis of lipid A, a phosphorylated glycolipid that anchors the lipopolysaccharide to the outer membrane of the cell. The polypeptide is UDP-3-O-acylglucosamine N-acyltransferase (Anaeromyxobacter sp. (strain K)).